A 273-amino-acid polypeptide reads, in one-letter code: Odontogenic ameloblast-associated protein (273 aa).

The N-terminal stretch at M1 to S15 is a signal peptide. The tract at residues Q100 to P124 is disordered. Residues S110–S121 show a composition bias toward low complexity. T114 and T118 each carry an O-linked (GalNAc...) threonine glycan. An interaction with ARHGEF5 region spans residues M125–Y127. Residues T159, T240, T241, T247, T252, T258, and T267 are each glycosylated (O-linked (GalNAc...) threonine). The segment covering T240–T252 has biased composition (polar residues). The disordered stretch occupies residues T240 to P273. A compositionally biased stretch (basic and acidic residues) spans Q263 to P273.

It belongs to the ODAM family. Interacts (via C-terminus) with ARHGEF5. O-glycosylated. As to expression, highly expressed in tooth-associated epithelia. Predominantly expressed in mandible.

It localises to the secreted. It is found in the cytoplasm. The protein resides in the nucleus. Functionally, tooth-associated epithelia protein that probably plays a role in odontogenesis, the complex process that results in the initiation and generation of the tooth. May be incorporated in the enamel matrix at the end of mineralization process. Involved in the induction of RHOA activity via interaction with ARHGEF and expression of downstream factors such as ROCK. Plays a role in attachment of the junctional epithelium to the tooth surface. This is Odontogenic ameloblast-associated protein (Odam) from Mus musculus (Mouse).